Consider the following 328-residue polypeptide: GMP reductase (328 aa).

C176 (thioimidate intermediate) is an active-site residue. 205–228 lines the NADP(+) pocket; it reads IIADGGIRTHGDIAKSIRFGASMI.

Belongs to the IMPDH/GMPR family. GuaC type 2 subfamily.

The enzyme catalyses IMP + NH4(+) + NADP(+) = GMP + NADPH + 2 H(+). Its function is as follows. Catalyzes the irreversible NADPH-dependent deamination of GMP to IMP. It functions in the conversion of nucleobase, nucleoside and nucleotide derivatives of G to A nucleotides, and in maintaining the intracellular balance of A and G nucleotides. The sequence is that of GMP reductase from Streptococcus pneumoniae serotype 2 (strain D39 / NCTC 7466).